The chain runs to 389 residues: Major outer membrane porin (389 aa).

An N-terminal signal peptide occupies residues 1–23 (MKKLLKSALLSAAFAGSVGSLQA).

It belongs to the chlamydial porin (CP) (TC 1.B.2) family. In terms of assembly, part of a disulfide cross-linked outer membrane complex (COMC) composed of the major outer membrane porin (MOMP), the small cysteine-rich protein (OmcA) and the large cysteine-rich periplasmic protein (OmcB).

The protein localises to the cell outer membrane. In elementary bodies (EBs, the infectious stage, which is able to survive outside the host cell) provides the structural integrity of the outer envelope through disulfide cross-links with the small cysteine-rich protein and the large cysteine-rich periplasmic protein. It has been described in publications as the Sarkosyl-insoluble COMC (Chlamydia outer membrane complex), and serves as the functional equivalent of peptidoglycan. In terms of biological role, permits diffusion of specific solutes through the outer membrane. This chain is Major outer membrane porin (ompA), found in Chlamydia pneumoniae (Chlamydophila pneumoniae).